A 911-amino-acid chain; its full sequence is Protein translocase subunit SecA (911 aa).

Residues Gln87, Gly105–Thr109, and Asp510 contribute to the ATP site. Zn(2+) is bound by residues Cys896, Cys898, Cys907, and His908.

The protein belongs to the SecA family. In terms of assembly, monomer and homodimer. Part of the essential Sec protein translocation apparatus which comprises SecA, SecYEG and auxiliary proteins SecDF-YajC and YidC. Zn(2+) serves as cofactor.

It localises to the cell inner membrane. The protein localises to the cytoplasm. It catalyses the reaction ATP + H2O + cellular proteinSide 1 = ADP + phosphate + cellular proteinSide 2.. Part of the Sec protein translocase complex. Interacts with the SecYEG preprotein conducting channel. Has a central role in coupling the hydrolysis of ATP to the transfer of proteins into and across the cell membrane, serving both as a receptor for the preprotein-SecB complex and as an ATP-driven molecular motor driving the stepwise translocation of polypeptide chains across the membrane. This chain is Protein translocase subunit SecA, found in Acinetobacter baumannii (strain SDF).